The chain runs to 354 residues: P2Y purinoceptor 13 (354 aa).

The Extracellular portion of the chain corresponds to methionine 1 to alanine 49. Asparagine 23 and asparagine 31 each carry an N-linked (GlcNAc...) asparagine glycan. Residues leucine 50–valine 70 form a helical membrane-spanning segment. Topologically, residues histidine 71–threonine 77 are cytoplasmic. The chain crosses the membrane as a helical span at residues phenylalanine 78–phenylalanine 98. Residues lysine 99–arginine 117 lie on the Extracellular side of the membrane. An intrachain disulfide couples cysteine 116 to cysteine 194. The chain crosses the membrane as a helical span at residues phenylalanine 118–alanine 138. Topologically, residues phenylalanine 139–lysine 161 are cytoplasmic. A helical membrane pass occupies residues threonine 162 to serine 182. The Extracellular segment spans residues asparagine 183 to asparagine 211. A helical transmembrane segment spans residues isoleucine 212–alanine 232. Topologically, residues lysine 233–lysine 252 are cytoplasmic. A helical transmembrane segment spans residues leucine 253 to phenylalanine 273. At alanine 274–glutamate 300 the chain is on the extracellular side. The N-linked (GlcNAc...) asparagine glycan is linked to asparagine 285. The helical transmembrane segment at threonine 301–cysteine 321 threads the bilayer. The Cytoplasmic portion of the chain corresponds to lysine 322–glycine 333. A disordered region spans residues lysine 335 to glycine 354.

The protein belongs to the G-protein coupled receptor 1 family. Strong expression in spleen and adult brain. Lower expression in placenta, lung, liver, spinal cord, thymus, small intestine, uterus, stomach, testis, fetal brain, and adrenal gland. Not detected in pancreas, heart, kidney, skeletal muscle, ovary or fetal aorta. Clearly detected in lymph node and bone marrow, weakly detected in peripheral blood mononuclear cells (PBMC) and in peripheral blood leukocytes (PBL), but not detected in polymorphonuclear cells (PMN). In the brain, detected in all brain regions examined.

The protein resides in the cell membrane. Functionally, receptor for ADP. Coupled to G(i)-proteins. May play a role in hematopoiesis and the immune system. The sequence is that of P2Y purinoceptor 13 (P2RY13) from Homo sapiens (Human).